Here is a 122-residue protein sequence, read N- to C-terminus: Large ribosomal subunit protein uL14 (122 aa).

This sequence belongs to the universal ribosomal protein uL14 family. In terms of assembly, part of the 50S ribosomal subunit. Forms a cluster with proteins L3 and L19. In the 70S ribosome, L14 and L19 interact and together make contacts with the 16S rRNA in bridges B5 and B8.

Its function is as follows. Binds to 23S rRNA. Forms part of two intersubunit bridges in the 70S ribosome. This Chlamydia trachomatis serovar L2 (strain ATCC VR-902B / DSM 19102 / 434/Bu) protein is Large ribosomal subunit protein uL14.